Reading from the N-terminus, the 430-residue chain is Adenylosuccinate synthetase (430 aa).

GTP is bound by residues 12-18 (GDEGKGK) and 40-42 (GHT). The active-site Proton acceptor is Asp13. Mg(2+) contacts are provided by Asp13 and Gly40. Residues 13–16 (DEGK), 38–41 (NAGH), Thr128, Arg142, Gln223, Thr238, and Arg302 contribute to the IMP site. Catalysis depends on His41, which acts as the Proton donor. 298–304 (TTTGRPR) contacts substrate. GTP contacts are provided by residues Arg304, 330 to 332 (SID), and 412 to 414 (SVG).

The protein belongs to the adenylosuccinate synthetase family. In terms of assembly, homodimer. Requires Mg(2+) as cofactor.

It is found in the cytoplasm. It catalyses the reaction IMP + L-aspartate + GTP = N(6)-(1,2-dicarboxyethyl)-AMP + GDP + phosphate + 2 H(+). Its pathway is purine metabolism; AMP biosynthesis via de novo pathway; AMP from IMP: step 1/2. Its function is as follows. Plays an important role in the de novo pathway of purine nucleotide biosynthesis. Catalyzes the first committed step in the biosynthesis of AMP from IMP. The chain is Adenylosuccinate synthetase from Streptococcus pyogenes serotype M49 (strain NZ131).